The following is a 421-amino-acid chain: L-evernosamine nitrososynthase (421 aa).

Belongs to the acyl-CoA dehydrogenase family. Homotetramer. FAD is required as a cofactor.

The enzyme catalyses dTDP-beta-L-evernosamine + 2 NADPH + 2 O2 + H(+) = dTDP-2,3,6-trideoxy-3-C-methyl-4-O-methyl-3-nitroso-beta-L-arabino-hexopyranose + 2 NADP(+) + 3 H2O. The catalysed reaction is dTDP-beta-L-evernosamine + NADPH + O2 = dTDP-N-hydroxy-beta-L-evernosamine + NADP(+) + H2O. It carries out the reaction dTDP-N-hydroxy-beta-L-evernosamine + NADPH + O2 + H(+) = dTDP-2,3,6-trideoxy-3-C-methyl-4-O-methyl-3-nitroso-beta-L-arabino-hexopyranose + NADP(+) + 2 H2O. Its pathway is antibiotic biosynthesis. Functionally, nitrososynthase involved in the biosynthesis of everninomicin, a broad spectrum orthosomycin antibiotic. Catalyzes the double-oxidation of TDP-L-evernosamine to TDP-L-evernitrosose. The enzyme first oxidizes the substrate to a transient hydroxylamino intermediate, which is then further oxidized to nitroso sugar. The nitroso group is probably spontaneously oxidized giving TDP-L-evernitrose. In vitro, catalyzes the double-oxidation of TDP-L-epi-vancosamine to TDP-L-epi-vancosonitrose. Can also use biosynthetic progenitors of TDP-L-epi-vancosamine, but progenitors solely undergo single-oxidation reactions and terminate in the hydroxylamine oxidation state. The sequence is that of L-evernosamine nitrososynthase from Micromonospora sp. (strain ATCC 39149 / NRRL 15099 / SCC 1413).